The sequence spans 141 residues: Hemoglobin subunit alpha-2 (141 aa).

The Globin domain maps to 1-141 (VLSEGNKKII…VTYQLSSLYR (141 aa)). His-59 contributes to the O2 binding site. Position 88 (His-88) interacts with heme b.

The protein belongs to the globin family. As to quaternary structure, heterotetramer of two alpha chains and two beta chains. Red blood cells.

Functionally, involved in oxygen transport from the lung to the various peripheral tissues. The chain is Hemoglobin subunit alpha-2 from Torpedo marmorata (Marbled electric ray).